A 288-amino-acid chain; its full sequence is Nucleotide-binding protein Veis_1053 (288 aa).

10 to 17 contributes to the ATP binding site; that stretch reads GMSGSGKS. 59-62 contacts GTP; the sequence is DVRS.

Belongs to the RapZ-like family.

Functionally, displays ATPase and GTPase activities. The polypeptide is Nucleotide-binding protein Veis_1053 (Verminephrobacter eiseniae (strain EF01-2)).